Reading from the N-terminus, the 211-residue chain is tRNA (guanine-N(7)-)-methyltransferase (211 aa).

4 residues coordinate S-adenosyl-L-methionine: Glu-44, Asp-69, Asp-96, and Asp-118. The active site involves Asp-118. Lys-122 lines the substrate pocket. The tract at residues 124–129 (KHEKRR) is interaction with RNA. Substrate is bound by residues Asp-154 and 191 to 194 (TEYE).

Belongs to the class I-like SAM-binding methyltransferase superfamily. TrmB family.

It carries out the reaction guanosine(46) in tRNA + S-adenosyl-L-methionine = N(7)-methylguanosine(46) in tRNA + S-adenosyl-L-homocysteine. It participates in tRNA modification; N(7)-methylguanine-tRNA biosynthesis. Functionally, catalyzes the formation of N(7)-methylguanine at position 46 (m7G46) in tRNA. The polypeptide is tRNA (guanine-N(7)-)-methyltransferase (Streptococcus agalactiae serotype Ia (strain ATCC 27591 / A909 / CDC SS700)).